The following is a 282-amino-acid chain: Transcription factor BC1 (282 aa).

Residues Thr34–Arg123 are disordered. Polar residues predominate over residues Met45–Ser55. A compositionally biased stretch (basic and acidic residues) spans His75 to Arg84. The short motif at Ala109–Asp116 is the Nuclear localization signal element. The segment at Gln113 to Arg126 is basic motif; degenerate. Residues Gln113 to Leu163 enclose the bHLH domain. The tract at residues Glu127–Leu163 is helix-loop-helix motif. Residues Pro219–Gln251 are disordered.

It belongs to the bHLH protein family. As to quaternary structure, homodimer. Component of a nuclear cell elongation controlling complex made of ILI5/BUL1, LO9-177 and BC1. Interacts with ILI5/BUL1 only in the presence of LO9-177. Interacts with IBH1. Binds to LO9-177 in the nucleus. Interacts with BCL1. In terms of tissue distribution, preferentially present in anthers and leaves lamina joints. Expressed in seedlings, leaves sheaths, collars and panicles.

It is found in the nucleus. In terms of biological role, transcription activator that contributes, together with LO9-177 and ILI5/BUL1, to the promotion of leaf inclination and grain size by modulating cell elongation. Involved in the RLI1-dependent modulation of leaf inclination by promoting lamina joint cell elongation, especially in response to phosphate (Pi) availability. The polypeptide is Transcription factor BC1 (Oryza sativa subsp. japonica (Rice)).